Here is a 368-residue protein sequence, read N- to C-terminus: Propane 2-monooxygenase, hydroxylase component small subunit (368 aa).

Over residues Met1 to Phe17 the composition is skewed to basic and acidic residues. The segment at Met1–Ser32 is disordered.

The protein belongs to the TmoE/XamoE family. In terms of assembly, the propane 2-monooxygenase multicomponent enzyme system is composed of an electron transfer component and a monooxygenase component interacting with the effector protein MimD. The electron transfer component is composed of a reductase (MimB), and the monooxygenase component is formed by a large subunit (MimA) and a small subunit (MimC). Requires the presence of the chaperonin-like protein MimG to ensure a productive folding, resulting of a soluble MimC, which leads to the active form of MimABCD.

The catalysed reaction is propane + NADH + O2 + H(+) = propan-2-ol + NAD(+) + H2O. It carries out the reaction acetone + NADH + O2 + H(+) = hydroxyacetone + NAD(+) + H2O. The enzyme catalyses butan-2-one + NADH + O2 + H(+) = 1-hydroxy-2-butanone + NAD(+) + H2O. It catalyses the reaction phenol + NADH + O2 + H(+) = hydroquinone + NAD(+) + H2O. In terms of biological role, component of the propane 2-monooxygenase multicomponent enzyme system which is involved in the degradation of propane via the O2-dependent hydroxylation of propane. Also involved in the degradation of acetone via the O2-dependent hydroxylation of acetone. Also able to catalyze the oxidation of phenol, methylethylketone (2-butanone), 1-propanol and 2-propanol. This chain is Propane 2-monooxygenase, hydroxylase component small subunit, found in Mycolicibacterium smegmatis (strain ATCC 700084 / mc(2)155) (Mycobacterium smegmatis).